The chain runs to 140 residues: Large ribosomal subunit protein uL11 (140 aa).

It belongs to the universal ribosomal protein uL11 family. In terms of assembly, part of the ribosomal stalk of the 50S ribosomal subunit. Interacts with L10 and the large rRNA to form the base of the stalk. L10 forms an elongated spine to which L12 dimers bind in a sequential fashion forming a multimeric L10(L12)X complex. Post-translationally, one or more lysine residues are methylated.

Forms part of the ribosomal stalk which helps the ribosome interact with GTP-bound translation factors. The chain is Large ribosomal subunit protein uL11 from Staphylococcus aureus (strain bovine RF122 / ET3-1).